Consider the following 198-residue polypeptide: N-acetyltransferase 9-like protein (198 aa).

Residues Glu-34 to Glu-178 enclose the N-acetyltransferase domain.

It belongs to the acetyltransferase family. GNAT subfamily.

The polypeptide is N-acetyltransferase 9-like protein (Caenorhabditis briggsae).